The primary structure comprises 396 residues: Acetate kinase (396 aa).

N8 provides a ligand contact to Mg(2+). K15 contacts ATP. R89 provides a ligand contact to substrate. D146 (proton donor/acceptor) is an active-site residue. ATP is bound by residues 206 to 210 (HLGNG), 280 to 282 (DMR), and 328 to 332 (GVGEN). E382 serves as a coordination point for Mg(2+).

Belongs to the acetokinase family. Homodimer. Mg(2+) serves as cofactor. Mn(2+) is required as a cofactor.

The protein localises to the cytoplasm. The enzyme catalyses acetate + ATP = acetyl phosphate + ADP. The protein operates within metabolic intermediate biosynthesis; acetyl-CoA biosynthesis; acetyl-CoA from acetate: step 1/2. In terms of biological role, catalyzes the formation of acetyl phosphate from acetate and ATP. Can also catalyze the reverse reaction. This chain is Acetate kinase, found in Clavibacter michiganensis subsp. michiganensis (strain NCPPB 382).